Here is an 890-residue protein sequence, read N- to C-terminus: Protein translocase subunit SecA (890 aa).

Residues glutamine 86, 104–108, and aspartate 493 each bind ATP; that span reads GEGKT. Residues 851–872 are compositionally biased toward basic and acidic residues; it reads EASHGDGDAKKAPVVKKEESGR. The segment at 851 to 873 is disordered; the sequence is EASHGDGDAKKAPVVKKEESGRN. Cysteine 876, cysteine 878, cysteine 887, and cysteine 888 together coordinate Zn(2+).

Belongs to the SecA family. Monomer and homodimer. Part of the essential Sec protein translocation apparatus which comprises SecA, SecYEG and auxiliary proteins SecDF. Other proteins may also be involved. It depends on Zn(2+) as a cofactor.

The protein localises to the cell membrane. It is found in the cytoplasm. It carries out the reaction ATP + H2O + cellular proteinSide 1 = ADP + phosphate + cellular proteinSide 2.. Its function is as follows. Part of the Sec protein translocase complex. Interacts with the SecYEG preprotein conducting channel. Has a central role in coupling the hydrolysis of ATP to the transfer of proteins into and across the cell membrane, serving as an ATP-driven molecular motor driving the stepwise translocation of polypeptide chains across the membrane. This is Protein translocase subunit SecA from Alkaliphilus oremlandii (strain OhILAs) (Clostridium oremlandii (strain OhILAs)).